A 969-amino-acid chain; its full sequence is RNA polymerase-associated protein RapA (969 aa).

One can recognise a Helicase ATP-binding domain in the interval 164–334 (EVGRRHAPRV…FARLRLLDPD (171 aa)). An ATP-binding site is contributed by 177–184 (DEVGLGKT). A DEAH box motif is present at residues 280 to 283 (DEAH). One can recognise a Helicase C-terminal domain in the interval 492–679 (RVNWLIEKIQ…ESAKLNQSLK (188 aa)).

The protein belongs to the SNF2/RAD54 helicase family. RapA subfamily. Interacts with the RNAP. Has a higher affinity for the core RNAP than for the holoenzyme. Its ATPase activity is stimulated by binding to RNAP.

Transcription regulator that activates transcription by stimulating RNA polymerase (RNAP) recycling in case of stress conditions such as supercoiled DNA or high salt concentrations. Probably acts by releasing the RNAP, when it is trapped or immobilized on tightly supercoiled DNA. Does not activate transcription on linear DNA. Probably not involved in DNA repair. This Vibrio atlanticus (strain LGP32) (Vibrio splendidus (strain Mel32)) protein is RNA polymerase-associated protein RapA.